The primary structure comprises 262 residues: Type III pantothenate kinase (262 aa).

12–19 (DIGNTSIA) is an ATP binding site. Substrate contacts are provided by residues tyrosine 94 and 109-112 (GSDV). Residue aspartate 111 is the Proton acceptor of the active site. Aspartate 132 is a binding site for K(+). Threonine 135 provides a ligand contact to ATP. Position 187 (threonine 187) interacts with substrate.

The protein belongs to the type III pantothenate kinase family. Homodimer. The cofactor is NH4(+). K(+) serves as cofactor.

It is found in the cytoplasm. The catalysed reaction is (R)-pantothenate + ATP = (R)-4'-phosphopantothenate + ADP + H(+). It participates in cofactor biosynthesis; coenzyme A biosynthesis; CoA from (R)-pantothenate: step 1/5. Catalyzes the phosphorylation of pantothenate (Pan), the first step in CoA biosynthesis. The chain is Type III pantothenate kinase from Borreliella burgdorferi (strain ATCC 35210 / DSM 4680 / CIP 102532 / B31) (Borrelia burgdorferi).